Here is a 74-residue protein sequence, read N- to C-terminus: Cytochrome b559 subunit alpha (74 aa).

A helical membrane pass occupies residues 22 to 36 (VIHTVTIPSLFVAGW). Residue His-24 coordinates heme.

Belongs to the PsbE/PsbF family. Heterodimer of an alpha subunit and a beta subunit. PSII is composed of 1 copy each of membrane proteins PsbA, PsbB, PsbC, PsbD, PsbE, PsbF, PsbH, PsbI, PsbJ, PsbK, PsbL, PsbM, PsbT, PsbX, PsbY, PsbZ, Psb30/Ycf12, at least 3 peripheral proteins of the oxygen-evolving complex and a large number of cofactors. It forms dimeric complexes. It depends on heme b as a cofactor.

It localises to the plastid. The protein resides in the cyanelle thylakoid membrane. Its function is as follows. This b-type cytochrome is tightly associated with the reaction center of photosystem II (PSII). PSII is a light-driven water:plastoquinone oxidoreductase that uses light energy to abstract electrons from H(2)O, generating O(2) and a proton gradient subsequently used for ATP formation. It consists of a core antenna complex that captures photons, and an electron transfer chain that converts photonic excitation into a charge separation. In Cyanophora paradoxa, this protein is Cytochrome b559 subunit alpha.